Consider the following 69-residue polypeptide: uncharacterized protein (69 aa).

This is an uncharacterized protein from Acheta domesticus (House cricket).